The primary structure comprises 271 residues: Acyl-[acyl-carrier-protein]--UDP-N-acetylglucosamine O-acyltransferase (271 aa).

This sequence belongs to the transferase hexapeptide repeat family. LpxA subfamily. As to quaternary structure, homotrimer.

The protein localises to the cytoplasm. The catalysed reaction is a (3R)-hydroxyacyl-[ACP] + UDP-N-acetyl-alpha-D-glucosamine = a UDP-3-O-[(3R)-3-hydroxyacyl]-N-acetyl-alpha-D-glucosamine + holo-[ACP]. The protein operates within glycolipid biosynthesis; lipid IV(A) biosynthesis; lipid IV(A) from (3R)-3-hydroxytetradecanoyl-[acyl-carrier-protein] and UDP-N-acetyl-alpha-D-glucosamine: step 1/6. Its function is as follows. Involved in the biosynthesis of lipid A, a phosphorylated glycolipid that anchors the lipopolysaccharide to the outer membrane of the cell. This chain is Acyl-[acyl-carrier-protein]--UDP-N-acetylglucosamine O-acyltransferase, found in Agrobacterium fabrum (strain C58 / ATCC 33970) (Agrobacterium tumefaciens (strain C58)).